Reading from the N-terminus, the 382-residue chain is Gap junction alpha-1 protein (382 aa).

The Cytoplasmic segment spans residues 2 to 23; sequence GDWSALGKLLDKVQAYSTAGGK. Ser5 carries the phosphoserine modification. Residues 24–44 form a helical membrane-spanning segment; sequence VWLSVLFIFRILLLGTAVESA. The Extracellular portion of the chain corresponds to 45 to 76; sequence WGDEQSAFRCNTQQPGCENVCYDKSFPISHVR. Disulfide bonds link Cys54-Cys192 and Cys187-Cys198. Residues 77–97 form a helical membrane-spanning segment; sequence FWVLQIIFVSVPTLLYLAHVF. At 98–155 the chain is on the cytoplasmic side; that stretch reads YVMRKEEKLNKKEEELKVAQTDGVNVEMHLKQIEIKKFKYGIEEHGKVKMRGGLLRTY. Lys144 participates in a covalent cross-link: Glycyl lysine isopeptide (Lys-Gly) (interchain with G-Cter in SUMO). Residues 156-176 form a helical membrane-spanning segment; sequence IISILFKSVFEVAFLLIQWYI. The Extracellular segment spans residues 177–207; sequence YGFSLSAVYTCKRDPCPHQVDCFLSRPTEKT. The chain crosses the membrane as a helical span at residues 208 to 228; the sequence is IFIIFMLVVSLVSLALNIIEL. At 229–382 the chain is on the cytoplasmic side; that stretch reads FYVFFKGVKD…SRPRPDDLEI (154 aa). A Glycyl lysine isopeptide (Lys-Gly) (interchain with G-Cter in SUMO) cross-link involves residue Lys237. Residues 244–382 form an interaction with NOV region; it reads SDPYHATTGP…SRPRPDDLEI (139 aa). Tyr247 is modified (phosphotyrosine). A phosphoserine mark is found at Ser255, Ser257, and Ser262. The segment at 264–382 is interaction with UBQLN4; sequence KYAYFNGCSS…SRPRPDDLEI (119 aa). Residue Cys271 is modified to S-nitrosocysteine. Phosphothreonine is present on Thr275. 3 positions are modified to phosphoserine: Ser306, Ser314, and Ser325. Over residues 317-332 the composition is skewed to polar residues; the sequence is QNRMGQAGSTISNSHA. The tract at residues 317–382 is disordered; the sequence is QNRMGQAGST…SRPRPDDLEI (66 aa). Thr326 bears the Phosphothreonine mark. Phosphoserine occurs at positions 328, 330, and 365. Residues 362 to 374 are compositionally biased toward low complexity; that stretch reads RPSSRASSRASSR. Ser368 bears the Phosphoserine; by PKC/PRKCG and PKC/PRKCD mark. A phosphoserine mark is found at Ser369 and Ser373.

The protein belongs to the connexin family. Alpha-type (group II) subfamily. A connexon is composed of a hexamer of connexins. Interacts with SGSM3. Interacts with RIC1/CIP150. Interacts with CNST and CSNK1D. Interacts (via C-terminus) with TJP1. Interacts (via C-terminus) with SRC (via SH3 domain). Interacts (not ubiquitinated) with UBQLN4 (via UBA domain). Interacts with NOV. Interacts with TMEM65. Interacts with ANK3/ANKG and PKP2. In terms of processing, contains at least one intramolecular disulfide bond. Post-translationally, phosphorylation at Ser-325, Ser-328 and Ser-330 by CK1 modulates gap junction assembly. Phosphorylated at Ser-368 by PRKCG; phosphorylation induces disassembly of gap junction plaques and inhibition of gap junction activity. Phosphorylation at Ser-368 by PRKCD triggers its internalization into small vesicles leading to proteasome-mediated degradation. Sumoylated with SUMO1, SUMO2 and SUMO3, which may regulate the level of functional Cx43 gap junctions at the plasma membrane. May be desumoylated by SENP1 or SENP2. In terms of processing, S-nitrosylation at Cys-271 is enriched at the muscle endothelial gap junction in arteries, it augments channel permeability and may regulate of smooth muscle cell to endothelial cell communication. Post-translationally, acetylated in the developing cortex; leading to delocalization from the cell membrane. In terms of tissue distribution, detected in ventricle and atrium (at protein level).

Its subcellular location is the cell membrane. It localises to the cell junction. It is found in the gap junction. The protein localises to the endoplasmic reticulum. Its function is as follows. Gap junction protein that acts as a regulator of bladder capacity. A gap junction consists of a cluster of closely packed pairs of transmembrane channels, the connexons, through which materials of low MW diffuse from one cell to a neighboring cell. Negative regulator of bladder functional capacity: acts by enhancing intercellular electrical and chemical transmission, thus sensitizing bladder muscles to cholinergic neural stimuli and causing them to contract. May play a role in cell growth inhibition through the regulation of NOV expression and localization. Plays an essential role in gap junction communication in the ventricles. This Rattus norvegicus (Rat) protein is Gap junction alpha-1 protein (Gja1).